Here is a 103-residue protein sequence, read N- to C-terminus: Small ribosomal subunit protein uS10 (103 aa).

The protein belongs to the universal ribosomal protein uS10 family. In terms of assembly, part of the 30S ribosomal subunit.

In terms of biological role, involved in the binding of tRNA to the ribosomes. In Buchnera aphidicola subsp. Acyrthosiphon pisum (strain 5A), this protein is Small ribosomal subunit protein uS10.